The primary structure comprises 144 residues: Large ribosomal subunit protein uL13 (144 aa).

Belongs to the universal ribosomal protein uL13 family. In terms of assembly, part of the 50S ribosomal subunit.

Its function is as follows. This protein is one of the early assembly proteins of the 50S ribosomal subunit, although it is not seen to bind rRNA by itself. It is important during the early stages of 50S assembly. This Magnetococcus marinus (strain ATCC BAA-1437 / JCM 17883 / MC-1) protein is Large ribosomal subunit protein uL13.